A 157-amino-acid polypeptide reads, in one-letter code: Regulator of Ty1 transposition protein 102 (157 aa).

Serine 77 bears the Phosphoserine mark. Residues 95–157 (SLMTSHTKGD…TKESKDVKMN (63 aa)) are disordered. Positions 96 to 116 (LMTSHTKGDTSKATGAPSANQ) are enriched in polar residues. Serine 122 is modified (phosphoserine). The span at 147–157 (NTKESKDVKMN) shows a compositional bias: basic and acidic residues.

In terms of assembly, interacts with STH1 and SWI3. Component of the two forms of the RSC complex composed of at least either RSC1 or RSC2, and ARP7, ARP9, LDB7, NPL6, RSC3, RSC30, RSC4, RSC58, RSC6, RSC8, RSC9, SFH1, STH1, HTL1 and probably RTT102. The complexes interact with histone and histone variant components of centromeric chromatin. Probable additional component of the SWI/SNF global transcription activator complex. The 1.14 MDa SWI/SNF complex is composed of 11 different subunits: one copy each of SWI1, SNF2/SWI2, SNF5, SNF12/SWP73, ARP7/SWP61, ARP9/SWP59; two copies each of SWI3, SNF6, SNF11, SWP82; and three copies of TAF14/SWP29.

It localises to the nucleus. Its function is as follows. Probable component of the chromatin structure-remodeling complex (RSC) which is involved in transcription regulation and nucleosome positioning. RSC is responsible for the transfer of a histone octamer from a nucleosome core particle to naked DNA. The reaction requires ATP and involves an activated RSC-nucleosome intermediate. Remodeling reaction also involves DNA translocation, DNA twist and conformational change. As a reconfigurer of centromeric and flanking nucleosomes, RSC complex is required both for proper kinetochore function in chromosome segregation and, via a PKC1-dependent signaling pathway, for organization of the cellular cytoskeleton. Probable component of the SWI/SNF complex, an ATP-dependent chromatin-remodeling complex, is required for the positive and negative regulation of gene expression of a large number of genes. It changes chromatin structure by altering DNA-histone contacts within a nucleosome, leading eventually to a change in nucleosome position, thus facilitating or repressing binding of gene-specific transcription factors. The protein is Regulator of Ty1 transposition protein 102 (RTT102) of Saccharomyces cerevisiae (strain ATCC 204508 / S288c) (Baker's yeast).